Consider the following 184-residue polypeptide: Threonylcarbamoyl-AMP synthase (184 aa).

In terms of domain architecture, YrdC-like spans 1–184 (MNNLENIVEQ…IFTQHIFRQG (184 aa)).

This sequence belongs to the SUA5 family. TsaC subfamily.

The protein resides in the cytoplasm. It carries out the reaction L-threonine + hydrogencarbonate + ATP = L-threonylcarbamoyladenylate + diphosphate + H2O. Its function is as follows. Required for the formation of a threonylcarbamoyl group on adenosine at position 37 (t(6)A37) in tRNAs that read codons beginning with adenine. Catalyzes the conversion of L-threonine, HCO(3)(-)/CO(2) and ATP to give threonylcarbamoyl-AMP (TC-AMP) as the acyladenylate intermediate, with the release of diphosphate. This is Threonylcarbamoyl-AMP synthase from Actinobacillus pleuropneumoniae serotype 5b (strain L20).